We begin with the raw amino-acid sequence, 231 residues long: Casparian strip membrane protein 1 (231 aa).

At 1–69 (MSTSETATVI…FRQSDRGSRC (69 aa)) the chain is on the cytoplasmic side. A helical membrane pass occupies residues 70-90 (LAFLDFLLRIAAFGPALAAAI). The Extracellular portion of the chain corresponds to 91-117 (ATGTSDETLSVFTEFFQFRARFDDFPA). A helical transmembrane segment spans residues 118-138 (FLFLMVANAIAAGYLVLSLPF). Over 139-152 (SAVVVLRPQATGLR) the chain is Cytoplasmic. Residues 153 to 173 (LLLLVCDTIMIGLLTAAAAAA) form a helical membrane-spanning segment. Over 174–207 (AAIVELAHNGNERANWVAICMQFHGFCQRTSGAV) the chain is Extracellular. Residues 208-228 (VASFLSVFLFLLLVVLAAFAI) form a helical membrane-spanning segment. The Cytoplasmic portion of the chain corresponds to 229–231 (RKR).

This sequence belongs to the Casparian strip membrane proteins (CASP) family. In terms of assembly, homodimer and heterodimers.

The protein localises to the cell membrane. Functionally, regulates membrane-cell wall junctions and localized cell wall deposition. Required for establishment of the Casparian strip membrane domain (CSD) and the subsequent formation of Casparian strips, a cell wall modification of the root endodermis that determines an apoplastic barrier between the intraorganismal apoplasm and the extraorganismal apoplasm and prevents lateral diffusion. The chain is Casparian strip membrane protein 1 from Brachypodium distachyon (Purple false brome).